The primary structure comprises 578 residues: NADPH oxidase 4 (578 aa).

Residues 1–16 (MAVSWRSWLANEGVKH) lie on the Cytoplasmic side of the membrane. The helical transmembrane segment at 17–37 (LCLFIWLSMNVLLFWKTFLLY) threads the bilayer. Residues 38 to 62 (NQGPEYHYLHQMLGLGLCLSRASAS) lie on the Extracellular side of the membrane. The 246-residue stretch at 58-303 (RASASVLNLN…YCAERLYRYI (246 aa)) folds into the Ferric oxidoreductase domain. The helical transmembrane segment at 63–83 (VLNLNCSLILLPMCRTLLAYL) threads the bilayer. The Cytoplasmic portion of the chain corresponds to 84 to 103 (RGSQKVPSRRTRRLLDKSRT). A helical transmembrane segment spans residues 104 to 124 (FHITCGVTICIFSGVHVAAHL). Residues 125 to 154 (VNALNFSVNYSEDFVELNAARYRDEDPRKL) are Extracellular-facing. An N-linked (GlcNAc...) asparagine glycan is attached at asparagine 133. Residues 155-175 (LFTTVPGLTGVCMVVVLFLMI) form a helical membrane-spanning segment. Residues 176–188 (TASTYAIRVSNYD) lie on the Cytoplasmic side of the membrane. The chain crosses the membrane as a helical span at residues 189-209 (IFWYTHNLFFVFYMLLTLHVS). Residues 210-424 (GGLLKYQTNL…SPFEESLNYE (215 aa)) lie on the Extracellular side of the membrane. Positions 218–273 (NLDTHPPGCISLNRTSSQNISLPEYFSEHFHEPFPEGFSKPAEFTQHKFVKICMEE) are E-loop; essential for H2O2 generating catalytic activity. N-linked (GlcNAc...) asparagine glycosylation occurs at asparagine 230. The mediates interaction with TLR4 stretch occupies residues 248 to 575 (HEPFPEGFSK…YGTRFEYNKE (328 aa)). Residues 304-419 (RSNKPVTIIS…DGPFGSPFEE (116 aa)) form the FAD-binding FR-type domain. A helical transmembrane segment spans residues 425 to 445 (VSLCVAGGIGVTPFASILNTL). The Cytoplasmic portion of the chain corresponds to 446 to 578 (LDDWKPYKLR…RFEYNKESFS (133 aa)).

Interacts with protein disulfide isomerase. Interacts with, relocalizes and stabilizes CYBA/p22phox. Interacts with TLR4. Interacts with PPP1R15A. Interacts with LRRC8A; this interaction prevents the ubiquitin-mediated degradation of LRRC8A. Heme is required as a cofactor. Deubiquitinated by USP19. Post-translationally, N-glycosylated and glycosylation is required for its proper function. In terms of processing, N-glycosylated. As to expression, expressed by distal tubular cells in kidney cortex and in endothelial cells (at protein level). Widely expressed. Strongly expressed in kidney and to a lower extent in heart, adipocytes, hepatoma, endothelial cells, skeletal muscle, brain, several brain tumor cell lines and airway epithelial cells.

It is found in the cytoplasm. It localises to the endoplasmic reticulum membrane. Its subcellular location is the cell membrane. The protein resides in the cell junction. The protein localises to the focal adhesion. It is found in the nucleus. It localises to the nucleolus. Its subcellular location is the perinuclear region. The catalysed reaction is NADPH + 2 O2 = 2 superoxide + NADP(+) + H(+). The enzyme catalyses NADPH + O2 + H(+) = H2O2 + NADP(+). Its activity is regulated as follows. Inhibited by plumbagin. Activated by phorbol 12-myristate 13-acetate (PMA). Activated by insulin. Inhibited by diphenylene iodonium. In terms of biological role, NADPH oxidase that catalyzes predominantly the reduction of oxygen to H2O2. Can also catalyze to a smaller extent, the reduction of oxygen to superoxide. May function as an oxygen sensor regulating the KCNK3/TASK-1 potassium channel and HIF1A activity. May regulate insulin signaling cascade. May play a role in apoptosis, bone resorption and lipolysaccharide-mediated activation of NFKB. May produce superoxide in the nucleus and play a role in regulating gene expression upon cell stimulation. Promotes ferroptosis, reactive oxygen species production and reduced glutathione (GSH) levels by activating NLRP3 inflammasome activation and cytokine release. Functionally, NADPH oxidase that catalyzes the generation of superoxide from molecular oxygen utilizing NADPH as an electron donor. Involved in redox signaling in vascular cells. Modulates the nuclear activation of ERK1/2 and the ELK1 transcription factor, and is capable of inducing nuclear DNA damage. Lacks superoxide-generating NADPH oxidase activity. This Homo sapiens (Human) protein is NADPH oxidase 4 (NOX4).